The following is a 215-amino-acid chain: Hibernation-associated plasma protein HP-25 (215 aa).

A signal peptide spans 1-28 (MPAQRGGALSMGAAGFWILVLSITSALA). The tract at residues 29–96 (DSNNQGNSEP…RPKSAFAVKL (68 aa)) is disordered. 2 stretches are compositionally biased toward pro residues: residues 39-51 (CGPP…PGIP) and 60-77 (LGPP…PQGP). The Collagen-like domain maps to 40 to 81 (GPPGPPGPPGIPGFPGAPGALGPPGPPGVPGIPGPQGPPGDV). In terms of domain architecture, C1q spans 85–215 (SSRPKSAFAV…VFFGYLLYGK (131 aa)). An N-linked (GlcNAc...) asparagine glycan is attached at asparagine 167.

Plasma; synthesized in the liver.

The protein resides in the secreted. In terms of biological role, plasma proteins HP-20, HP-25, HP-27 and HP-55 form a 140 kDa complex via disulfide bonds in the plasma and are hibernation specific. This Tamias sibiricus (Siberian chipmunk) protein is Hibernation-associated plasma protein HP-25.